Here is an 880-residue protein sequence, read N- to C-terminus: DNA mismatch repair protein MutS (880 aa).

Residue G605 to S612 participates in ATP binding. The tract at residues Q790–S829 is disordered. Over residues V818–S829 the composition is skewed to polar residues.

It belongs to the DNA mismatch repair MutS family.

In terms of biological role, this protein is involved in the repair of mismatches in DNA. It is possible that it carries out the mismatch recognition step. This protein has a weak ATPase activity. In Limosilactobacillus fermentum (strain NBRC 3956 / LMG 18251) (Lactobacillus fermentum), this protein is DNA mismatch repair protein MutS.